A 123-amino-acid polypeptide reads, in one-letter code: Small ribosomal subunit protein uS12 (123 aa).

D89 is modified (3-methylthioaspartic acid). The disordered stretch occupies residues 104–123 (TQGVKDRRQRRSKYGAKRPK). A compositionally biased stretch (basic residues) spans 110 to 123 (RRQRRSKYGAKRPK).

This sequence belongs to the universal ribosomal protein uS12 family. In terms of assembly, part of the 30S ribosomal subunit. Contacts proteins S8 and S17. May interact with IF1 in the 30S initiation complex.

Functionally, with S4 and S5 plays an important role in translational accuracy. In terms of biological role, interacts with and stabilizes bases of the 16S rRNA that are involved in tRNA selection in the A site and with the mRNA backbone. Located at the interface of the 30S and 50S subunits, it traverses the body of the 30S subunit contacting proteins on the other side and probably holding the rRNA structure together. The combined cluster of proteins S8, S12 and S17 appears to hold together the shoulder and platform of the 30S subunit. In Rhodospirillum rubrum (strain ATCC 11170 / ATH 1.1.1 / DSM 467 / LMG 4362 / NCIMB 8255 / S1), this protein is Small ribosomal subunit protein uS12.